We begin with the raw amino-acid sequence, 158 residues long: 6,7-dimethyl-8-ribityllumazine synthase (158 aa).

Residues phenylalanine 23, 57–59, and 81–83 contribute to the 5-amino-6-(D-ribitylamino)uracil site; these read AFE and TVI. 86–87 serves as a coordination point for (2S)-2-hydroxy-3-oxobutyl phosphate; that stretch reads GT. Histidine 89 acts as the Proton donor in catalysis. 5-amino-6-(D-ribitylamino)uracil is bound at residue phenylalanine 114. Arginine 128 provides a ligand contact to (2S)-2-hydroxy-3-oxobutyl phosphate.

The protein belongs to the DMRL synthase family.

The catalysed reaction is (2S)-2-hydroxy-3-oxobutyl phosphate + 5-amino-6-(D-ribitylamino)uracil = 6,7-dimethyl-8-(1-D-ribityl)lumazine + phosphate + 2 H2O + H(+). Its pathway is cofactor biosynthesis; riboflavin biosynthesis; riboflavin from 2-hydroxy-3-oxobutyl phosphate and 5-amino-6-(D-ribitylamino)uracil: step 1/2. Functionally, catalyzes the formation of 6,7-dimethyl-8-ribityllumazine by condensation of 5-amino-6-(D-ribitylamino)uracil with 3,4-dihydroxy-2-butanone 4-phosphate. This is the penultimate step in the biosynthesis of riboflavin. In Desulforudis audaxviator (strain MP104C), this protein is 6,7-dimethyl-8-ribityllumazine synthase.